The following is a 647-amino-acid chain: DNA mismatch repair protein MutL (647 aa).

The protein belongs to the DNA mismatch repair MutL/HexB family.

In terms of biological role, this protein is involved in the repair of mismatches in DNA. It is required for dam-dependent methyl-directed DNA mismatch repair. May act as a 'molecular matchmaker', a protein that promotes the formation of a stable complex between two or more DNA-binding proteins in an ATP-dependent manner without itself being part of a final effector complex. The sequence is that of DNA mismatch repair protein MutL from Bacillus cereus (strain ATCC 10987 / NRS 248).